Consider the following 503-residue polypeptide: Na(+)-translocating NADH-quinone reductase subunit B (503 aa).

The next 4 membrane-spanning stretches (helical) occupy residues M55–V75, I120–I142, T161–V181, and F186–F206. The residue at position 248 (T248) is an FMN phosphoryl threonine. The next 5 membrane-spanning stretches (helical) occupy residues T361–W381, F387–G407, F417–M437, W452–Y472, and G475–V495.

This sequence belongs to the NqrB/RnfD family. In terms of assembly, composed of six subunits; NqrA, NqrB, NqrC, NqrD, NqrE and NqrF. FMN is required as a cofactor.

It localises to the cell inner membrane. It carries out the reaction a ubiquinone + n Na(+)(in) + NADH + H(+) = a ubiquinol + n Na(+)(out) + NAD(+). Its function is as follows. NQR complex catalyzes the reduction of ubiquinone-1 to ubiquinol by two successive reactions, coupled with the transport of Na(+) ions from the cytoplasm to the periplasm. NqrA to NqrE are probably involved in the second step, the conversion of ubisemiquinone to ubiquinol. The sequence is that of Na(+)-translocating NADH-quinone reductase subunit B from Chlamydia felis (strain Fe/C-56) (Chlamydophila felis).